Here is a 219-residue protein sequence, read N- to C-terminus: Ribose-5-phosphate isomerase A (219 aa).

Substrate is bound by residues 28–31 (SGST), 81–84 (DGAD), and 94–97 (KGGG). E103 acts as the Proton acceptor in catalysis. Substrate is bound at residue K121.

It belongs to the ribose 5-phosphate isomerase family. As to quaternary structure, homodimer.

It catalyses the reaction aldehydo-D-ribose 5-phosphate = D-ribulose 5-phosphate. It functions in the pathway carbohydrate degradation; pentose phosphate pathway; D-ribose 5-phosphate from D-ribulose 5-phosphate (non-oxidative stage): step 1/1. Catalyzes the reversible conversion of ribose-5-phosphate to ribulose 5-phosphate. This chain is Ribose-5-phosphate isomerase A, found in Pasteurella multocida (strain Pm70).